A 435-amino-acid polypeptide reads, in one-letter code: Putative GMP synthase [glutamine-hydrolyzing] 2 (435 aa).

The Glutamine amidotransferase type-1; truncated domain maps to 1–120; that stretch reads MKQDMIVILD…VFDTCQAEAN (120 aa). Positions 121-310 constitute a GMPS ATP-PPase domain; the sequence is WNMANFVNDQ…LGLPYEMVYR (190 aa). 148 to 154 serves as a coordination point for ATP; that stretch reads SGGVDSS.

Homodimer.

It catalyses the reaction XMP + L-glutamine + ATP + H2O = GMP + L-glutamate + AMP + diphosphate + 2 H(+). The protein operates within purine metabolism; GMP biosynthesis; GMP from XMP (L-Gln route): step 1/1. Catalyzes the synthesis of GMP from XMP. This Bacteroides thetaiotaomicron (strain ATCC 29148 / DSM 2079 / JCM 5827 / CCUG 10774 / NCTC 10582 / VPI-5482 / E50) protein is Putative GMP synthase [glutamine-hydrolyzing] 2 (guaA2).